A 519-amino-acid polypeptide reads, in one-letter code: RxLR effector protein PITG_15278 (519 aa).

Residues 1-24 form the signal peptide; it reads MHFIYRVVLVLAAFALFKVDSISA. Residues 49–59 carry the RxLR-dEER motif; it reads RQLRVMDDNER.

It belongs to the RxLR effector family.

It localises to the secreted. The protein resides in the host cytoplasm. Effector that enhances P.infestans colonization of Nicotiana benthamiana leaves. The protein is RxLR effector protein PITG_15278 of Phytophthora infestans (strain T30-4) (Potato late blight agent).